The sequence spans 392 residues: L-rhamnonate dehydratase (392 aa).

Residues His22 and Arg48 each coordinate substrate. Positions 214, 240, and 268 each coordinate Mg(2+). Residue His318 is the Proton acceptor of the active site. Glu338 lines the substrate pocket.

Belongs to the mandelate racemase/muconate lactonizing enzyme family. RhamD subfamily. In terms of assembly, homooctamer; tetramer of dimers. It depends on Mg(2+) as a cofactor.

It carries out the reaction L-rhamnonate = 2-dehydro-3-deoxy-L-rhamnonate + H2O. Catalyzes the dehydration of L-rhamnonate to 2-keto-3-deoxy-L-rhamnonate (KDR). The polypeptide is L-rhamnonate dehydratase (Burkholderia ambifaria (strain MC40-6)).